We begin with the raw amino-acid sequence, 203 residues long: Putative 3-methyladenine DNA glycosylase (203 aa).

Belongs to the DNA glycosylase MPG family.

The chain is Putative 3-methyladenine DNA glycosylase from Clostridium botulinum (strain ATCC 19397 / Type A).